A 236-amino-acid polypeptide reads, in one-letter code: Small ribosomal subunit protein uS2c (236 aa).

This sequence belongs to the universal ribosomal protein uS2 family.

Its subcellular location is the plastid. The protein resides in the chloroplast. The sequence is that of Small ribosomal subunit protein uS2c (rps2) from Daucus carota (Wild carrot).